Reading from the N-terminus, the 218-residue chain is Large ribosomal subunit protein bL25 (218 aa).

The disordered stretch occupies residues 187 to 218 (SATAAVEEAKEDGAPEESAQGQGAAEAQETGK). Residues 202–218 (EESAQGQGAAEAQETGK) are compositionally biased toward low complexity.

The protein belongs to the bacterial ribosomal protein bL25 family. CTC subfamily. As to quaternary structure, part of the 50S ribosomal subunit; part of the 5S rRNA/L5/L18/L25 subcomplex. Contacts the 5S rRNA. Binds to the 5S rRNA independently of L5 and L18.

Functionally, this is one of the proteins that binds to the 5S RNA in the ribosome where it forms part of the central protuberance. This is Large ribosomal subunit protein bL25 from Anaplasma marginale (strain Florida).